The sequence spans 77 residues: uncharacterized protein (77 aa).

In terms of biological role, putative sugar-binding regulatory protein for the alpha-amylase gene. This is an uncharacterized protein from Streptomyces violaceus (Streptomyces venezuelae).